We begin with the raw amino-acid sequence, 493 residues long: Intermediate cleaving peptidase 55, mitochondrial (493 aa).

The N-terminal 19 residues, 1-19 (MQFLARNLVRRVSRTQVVS), are a transit peptide targeting the mitochondrion. Mn(2+) contacts are provided by aspartate 296, aspartate 307, histidine 383, glutamate 410, and glutamate 433.

This sequence belongs to the peptidase M24B family. Mn(2+) serves as cofactor.

It is found in the mitochondrion. The protein localises to the nucleus. Functionally, aminopeptidase which cleaves preprotein intermediates that carry destabilizing N-ter amino acid residues after the mitochondrial processing peptidase (MPP) cleavage site and is thus critical for stabilization of the mitochondrial proteome. The chain is Intermediate cleaving peptidase 55, mitochondrial from Arabidopsis thaliana (Mouse-ear cress).